Reading from the N-terminus, the 71-residue chain is Large ribosomal subunit protein bL31 (71 aa).

Zn(2+)-binding residues include cysteine 16, cysteine 18, cysteine 38, and cysteine 41.

It belongs to the bacterial ribosomal protein bL31 family. Type A subfamily. In terms of assembly, part of the 50S ribosomal subunit. Requires Zn(2+) as cofactor.

Functionally, binds the 23S rRNA. The protein is Large ribosomal subunit protein bL31 of Chromobacterium violaceum (strain ATCC 12472 / DSM 30191 / JCM 1249 / CCUG 213 / NBRC 12614 / NCIMB 9131 / NCTC 9757 / MK).